A 451-amino-acid chain; its full sequence is Prenyltransferase anuH (451 aa).

Residues Arg-105, Lys-189, Tyr-191, Lys-257, Tyr-259, and Tyr-422 each coordinate dimethylallyl diphosphate.

The protein belongs to the tryptophan dimethylallyltransferase family.

It carries out the reaction (8S)-annullatin E + dimethylallyl diphosphate = (8S)-annullatin J + diphosphate. Its pathway is secondary metabolite biosynthesis. Its function is as follows. Cytochrome P450 monooxygenase; part of the gene cluster that mediates the biosynthesis of annullatin D, an alkylated aromatic polyketide with a fused dihydrobenzofuran lactone ring system that exhibits potent agonistic activities toward the cannabinoid receptors. Within the pathway, anuH uses dimethylallyl diphosphate (DMAPP) to prenylate (8S)-annullatin E to produce (8S)-annullatin J. Geranyl and farnesyl diphosphate are not consumed by anuH for prenylation. 2-hydroxymethyl-3-pentylphenol, without the hydroxyl group at the side chain, is also accepted by anuH, but only with low conversion yield. The annullatin backbone 2-hydroxymethyl-3-pentylphenol is assembled from one acetyl-CoA starter unit and 5 malonyl-CoA elongation units by cooperation of the highly reducing polyketide synthase anuA, the short-chain dehydrogenase anuB and the oxidoreductase anuC, before being hydroxylated at the C-5 alkyl chain by the cytochrome P450 monooxygenase anuE to form (8S)-annullatin E. The prenyltransferase anuH subsequently installs one isoprenyl group at the benzene ring to form (8S)-annullatin J. Enzymatic or nonenzymatic dihydro-benzofuran ring formation between the prenyl and the phenolic hydroxyl groups in (8S)-annullatin J results in two diastereomers (2S,9S)-annullatin H and compound 12. The intermediate (2S,9S)-annullatin H is then converted to (2S,9S)-annullatin D by the FAD-linked oxidoreductase anuG-catalyzed five-member lactone ring formation. The isomer 12 acts as a substrate for the short-chain dehydrogenase anuF and is oxidized to (2R)-annullatin F, which is subsequently acetylated by an acetyltransferase leading to (2R)-annullatin G formation. The remaining enzymes identified within the cluster, anuD, anuI and anuJ, seem not to be involved in annullatin biosynthesis. The polypeptide is Prenyltransferase anuH (Penicillium roqueforti (strain FM164)).